Consider the following 515-residue polypeptide: MTKRALISVSDKSGIVDFAQELKNLGWEIVSTGGTKVALDKAGIDTIAIDDVTGFPEMMDGRVKTLHPNIHGGLLARRDLDSHVNAMKEHEITPIDLVVVNLYPFKETILKPDATYADAVENIDIGGPSMLRSAAKNHASVTVVVDPADYAEILDELSANGETSFETRKRLAAKVFRHTAAYDALIAEYFTAQVGEEKPEKLTLTYDLKQPMRYGENPQQNADFYQKALPTAYSIASAQQLNGKELSFNNIRDADAAIRVIRDFKDRPTVVALKHMNPCGIGQADDIETAWDYAYEADLVSIFGGIVVLNREVDAATAEKMHAIFLEIIIAPSYTDEALAILTTKKKNLRILQLPFDAQEASEAEKEYTGVVGGLLVQNQDVVKESPADWQVVTKRQPTKTEETALEFAWKAIKYVKSNGIIVTNDHMTLGVGPGQTNRVASVRIAIDQAKDRLDGAVLASDAFFPFADNVEEIAAAGIKAIIQPGGSVRDQESIDMADKYGIAMVFTGVRHFRH.

The 145-residue stretch at 1 to 145 folds into the MGS-like domain; sequence MTKRALISVS…KNHASVTVVV (145 aa).

It belongs to the PurH family.

It catalyses the reaction (6R)-10-formyltetrahydrofolate + 5-amino-1-(5-phospho-beta-D-ribosyl)imidazole-4-carboxamide = 5-formamido-1-(5-phospho-D-ribosyl)imidazole-4-carboxamide + (6S)-5,6,7,8-tetrahydrofolate. It carries out the reaction IMP + H2O = 5-formamido-1-(5-phospho-D-ribosyl)imidazole-4-carboxamide. It functions in the pathway purine metabolism; IMP biosynthesis via de novo pathway; 5-formamido-1-(5-phospho-D-ribosyl)imidazole-4-carboxamide from 5-amino-1-(5-phospho-D-ribosyl)imidazole-4-carboxamide (10-formyl THF route): step 1/1. It participates in purine metabolism; IMP biosynthesis via de novo pathway; IMP from 5-formamido-1-(5-phospho-D-ribosyl)imidazole-4-carboxamide: step 1/1. The protein is Bifunctional purine biosynthesis protein PurH of Streptococcus mutans serotype c (strain ATCC 700610 / UA159).